The chain runs to 294 residues: UDP-3-O-acyl-N-acetylglucosamine deacetylase (294 aa).

Residues histidine 75, histidine 232, and aspartate 236 each contribute to the Zn(2+) site. Histidine 259 acts as the Proton donor in catalysis.

The protein belongs to the LpxC family. It depends on Zn(2+) as a cofactor.

The enzyme catalyses a UDP-3-O-[(3R)-3-hydroxyacyl]-N-acetyl-alpha-D-glucosamine + H2O = a UDP-3-O-[(3R)-3-hydroxyacyl]-alpha-D-glucosamine + acetate. Its pathway is glycolipid biosynthesis; lipid IV(A) biosynthesis; lipid IV(A) from (3R)-3-hydroxytetradecanoyl-[acyl-carrier-protein] and UDP-N-acetyl-alpha-D-glucosamine: step 2/6. In terms of biological role, catalyzes the hydrolysis of UDP-3-O-myristoyl-N-acetylglucosamine to form UDP-3-O-myristoylglucosamine and acetate, the committed step in lipid A biosynthesis. The protein is UDP-3-O-acyl-N-acetylglucosamine deacetylase of Campylobacter jejuni subsp. jejuni serotype O:2 (strain ATCC 700819 / NCTC 11168).